An 878-amino-acid chain; its full sequence is Alanine--tRNA ligase (878 aa).

Residues H566, H570, C668, and H672 each coordinate Zn(2+).

Belongs to the class-II aminoacyl-tRNA synthetase family. Zn(2+) is required as a cofactor.

The protein resides in the cytoplasm. The enzyme catalyses tRNA(Ala) + L-alanine + ATP = L-alanyl-tRNA(Ala) + AMP + diphosphate. Functionally, catalyzes the attachment of alanine to tRNA(Ala) in a two-step reaction: alanine is first activated by ATP to form Ala-AMP and then transferred to the acceptor end of tRNA(Ala). Also edits incorrectly charged Ser-tRNA(Ala) and Gly-tRNA(Ala) via its editing domain. The sequence is that of Alanine--tRNA ligase from Geobacillus thermodenitrificans (strain NG80-2).